The primary structure comprises 619 residues: Probable Xaa-Pro aminopeptidase P (619 aa).

Residues aspartate 415, aspartate 426, glutamate 524, and glutamate 538 each contribute to the Mn(2+) site.

This sequence belongs to the peptidase M24B family. Mn(2+) serves as cofactor.

The enzyme catalyses Release of any N-terminal amino acid, including proline, that is linked to proline, even from a dipeptide or tripeptide.. In terms of biological role, catalyzes the removal of a penultimate prolyl residue from the N-termini of peptides. In Fusarium vanettenii (strain ATCC MYA-4622 / CBS 123669 / FGSC 9596 / NRRL 45880 / 77-13-4) (Fusarium solani subsp. pisi), this protein is Probable Xaa-Pro aminopeptidase P (AMPP).